The chain runs to 119 residues: Small ribosomal subunit protein uS13 (119 aa).

Residues 92–119 (RRGLPVRGQRTKTNARTRKGPRKAIRAR) are disordered.

The protein belongs to the universal ribosomal protein uS13 family. In terms of assembly, part of the 30S ribosomal subunit. Forms a loose heterodimer with protein S19. Forms two bridges to the 50S subunit in the 70S ribosome.

Its function is as follows. Located at the top of the head of the 30S subunit, it contacts several helices of the 16S rRNA. In the 70S ribosome it contacts the 23S rRNA (bridge B1a) and protein L5 of the 50S subunit (bridge B1b), connecting the 2 subunits; these bridges are implicated in subunit movement. Contacts the tRNAs in the A and P-sites. The protein is Small ribosomal subunit protein uS13 of Nitrosomonas eutropha (strain DSM 101675 / C91 / Nm57).